The sequence spans 126 residues: Histone H2B type 1-N (126 aa).

A compositionally biased stretch (low complexity) spans 1–12; the sequence is MPEPSKSAPAPK. The interval 1 to 36 is disordered; sequence MPEPSKSAPAPKKGSKKAVTKAQKKDGKKRKRSRKE. At Pro2 the chain carries N-acetylproline. ADP-ribosyl glutamic acid is present on Glu3. Lys6 is subject to N6-(2-hydroxyisobutyryl)lysine; alternate. The residue at position 6 (Lys6) is an N6-(beta-hydroxybutyryl)lysine; alternate. Lys6 carries the post-translational modification N6-acetyllysine; alternate. Lys6 carries the post-translational modification N6-butyryllysine; alternate. N6-crotonyllysine; alternate is present on Lys6. Position 6 is an N6-lactoyllysine; alternate (Lys6). A Glycyl lysine isopeptide (Lys-Gly) (interchain with G-Cter in SUMO2); alternate cross-link involves residue Lys6. Ser7 bears the ADP-ribosylserine mark. Residue Lys12 is modified to N6-(beta-hydroxybutyryl)lysine; alternate. 2 positions are modified to N6-acetyllysine; alternate: Lys12 and Lys13. Lys12 and Lys13 each carry N6-crotonyllysine; alternate. Lys12 bears the N6-lactoyllysine; alternate mark. An N6-(2-hydroxyisobutyryl)lysine; alternate modification is found at Lys13. Ser15 bears the Phosphoserine; by STK4/MST1 mark. N6-acetyllysine; alternate occurs at positions 16, 17, 21, and 24. An N6-crotonyllysine; alternate mark is found at Lys16, Lys17, Lys21, and Lys24. N6-lactoyllysine; alternate is present on residues Lys16, Lys17, Lys21, and Lys24. Lys17 is subject to N6-glutaryllysine; alternate. N6-(2-hydroxyisobutyryl)lysine; alternate occurs at positions 21 and 24. An N6-(beta-hydroxybutyryl)lysine; alternate modification is found at Lys21. The residue at position 21 (Lys21) is an N6-butyryllysine; alternate. Lys21 is covalently cross-linked (Glycyl lysine isopeptide (Lys-Gly) (interchain with G-Cter in SUMO2); alternate). N6-(2-hydroxyisobutyryl)lysine is present on Lys25. Residue Lys35 is modified to N6-(2-hydroxyisobutyryl)lysine; alternate. The residue at position 35 (Lys35) is an N6-(beta-hydroxybutyryl)lysine; alternate. Lys35 carries the N6-crotonyllysine; alternate modification. Lys35 bears the N6-glutaryllysine; alternate mark. Position 35 is an N6-succinyllysine; alternate (Lys35). Residue Lys35 forms a Glycyl lysine isopeptide (Lys-Gly) (interchain with G-Cter in ubiquitin); alternate linkage. The residue at position 36 (Glu36) is a PolyADP-ribosyl glutamic acid. Ser37 bears the Phosphoserine; by AMPK mark. N6-(2-hydroxyisobutyryl)lysine; alternate occurs at positions 44, 47, and 58. Lys44 carries the N6-lactoyllysine; alternate modification. 2 positions are modified to N6-glutaryllysine; alternate: Lys44 and Lys47. Lys47 carries the N6-methyllysine; alternate modification. N6,N6-dimethyllysine; alternate is present on Lys58. Arg80 carries the dimethylated arginine modification. Lys86 carries the post-translational modification N6-(2-hydroxyisobutyryl)lysine; alternate. Lys86 carries the N6-acetyllysine; alternate modification. An N6-lactoyllysine; alternate modification is found at Lys86. An N6,N6,N6-trimethyllysine; alternate modification is found at Lys86. An omega-N-methylarginine mark is found at Arg87 and Arg93. Residue Lys109 is modified to N6-(2-hydroxyisobutyryl)lysine; alternate. Residue Lys109 is modified to N6-lactoyllysine; alternate. Lys109 bears the N6-glutaryllysine; alternate mark. Lys109 is subject to N6-methyllysine; alternate. An O-linked (GlcNAc) serine glycan is attached at Ser113. Position 116 is a phosphothreonine (Thr116). N6-(2-hydroxyisobutyryl)lysine; alternate is present on residues Lys117 and Lys121. Lys117 is modified (N6-(beta-hydroxybutyryl)lysine; alternate). N6-lactoyllysine; alternate occurs at positions 117 and 121. 2 positions are modified to N6-glutaryllysine; alternate: Lys117 and Lys121. N6-succinyllysine; alternate is present on residues Lys117 and Lys121. Lys117 carries the N6-methylated lysine; alternate modification. A Glycyl lysine isopeptide (Lys-Gly) (interchain with G-Cter in ubiquitin); alternate cross-link involves residue Lys121.

It belongs to the histone H2B family. As to quaternary structure, the nucleosome is a histone octamer containing two molecules each of H2A, H2B, H3 and H4 assembled in one H3-H4 heterotetramer and two H2A-H2B heterodimers. The octamer wraps approximately 147 bp of DNA. In terms of processing, monoubiquitination at Lys-35 (H2BK34Ub) by the MSL1/MSL2 dimer is required for histone H3 'Lys-4' (H3K4me) and 'Lys-79' (H3K79me) methylation and transcription activation at specific gene loci, such as HOXA9 and MEIS1 loci. Similarly, monoubiquitination at Lys-121 (H2BK120Ub) by the RNF20/40 complex gives a specific tag for epigenetic transcriptional activation and is also prerequisite for histone H3 'Lys-4' and 'Lys-79' methylation. It also functions cooperatively with the FACT dimer to stimulate elongation by RNA polymerase II. H2BK120Ub also acts as a regulator of mRNA splicing: deubiquitination by USP49 is required for efficient cotranscriptional splicing of a large set of exons. Phosphorylated on Ser-15 (H2BS14ph) by STK4/MST1 during apoptosis; which facilitates apoptotic chromatin condensation. Also phosphorylated on Ser-15 in response to DNA double strand breaks (DSBs), and in correlation with somatic hypermutation and immunoglobulin class-switch recombination. Phosphorylation at Ser-37 (H2BS36ph) by AMPK in response to stress promotes transcription. Post-translationally, glcNAcylation at Ser-113 promotes monoubiquitination of Lys-121. It fluctuates in response to extracellular glucose, and associates with transcribed genes. In terms of processing, ADP-ribosylated by PARP1 or PARP2 on Ser-7 (H2BS6ADPr) in response to DNA damage. H2BS6ADPr promotes recruitment of CHD1L. Mono-ADP-ribosylated on Glu-3 (H2BE2ADPr) by PARP3 in response to single-strand breaks. Poly ADP-ribosylation on Glu-36 (H2BE35ADPr) by PARP1 regulates adipogenesis: it inhibits phosphorylation at Ser-37 (H2BS36ph), thereby blocking expression of pro-adipogenetic genes. Crotonylation (Kcr) is specifically present in male germ cells and marks testis-specific genes in post-meiotic cells, including X-linked genes that escape sex chromosome inactivation in haploid cells. Crotonylation marks active promoters and enhancers and confers resistance to transcriptional repressors. It is also associated with post-meiotically activated genes on autosomes. Post-translationally, lactylated in macrophages by EP300/P300 by using lactoyl-CoA directly derived from endogenous or exogenous lactate, leading to stimulates gene transcription.

It localises to the nucleus. The protein resides in the chromosome. Core component of nucleosome. Nucleosomes wrap and compact DNA into chromatin, limiting DNA accessibility to the cellular machineries which require DNA as a template. Histones thereby play a central role in transcription regulation, DNA repair, DNA replication and chromosomal stability. DNA accessibility is regulated via a complex set of post-translational modifications of histones, also called histone code, and nucleosome remodeling. This chain is Histone H2B type 1-N (H2BC15), found in Bos taurus (Bovine).